Reading from the N-terminus, the 179-residue chain is Hypoxanthine-guanine phosphoribosyltransferase (179 aa).

Residues K42 and G43 each coordinate diphosphate. Mg(2+) is bound by residues E98 and D99. The active-site Proton acceptor is E102. GMP-binding positions include K130, 151-152 (FV), and D158. R164 is a binding site for diphosphate.

Belongs to the purine/pyrimidine phosphoribosyltransferase family. Mg(2+) serves as cofactor.

The protein localises to the cytoplasm. The enzyme catalyses IMP + diphosphate = hypoxanthine + 5-phospho-alpha-D-ribose 1-diphosphate. It carries out the reaction GMP + diphosphate = guanine + 5-phospho-alpha-D-ribose 1-diphosphate. It participates in purine metabolism; IMP biosynthesis via salvage pathway; IMP from hypoxanthine: step 1/1. It functions in the pathway purine metabolism; GMP biosynthesis via salvage pathway; GMP from guanine: step 1/1. Purine salvage pathway enzyme that catalyzes the transfer of the ribosyl-5-phosphate group from 5-phospho-alpha-D-ribose 1-diphosphate (PRPP) to the N9 position of the 6-oxopurines hypoxanthine and guanine to form the corresponding ribonucleotides IMP (inosine 5'-monophosphate) and GMP (guanosine 5'-monophosphate), with the release of PPi. In Staphylococcus epidermidis (strain ATCC 35984 / DSM 28319 / BCRC 17069 / CCUG 31568 / BM 3577 / RP62A), this protein is Hypoxanthine-guanine phosphoribosyltransferase (hpt).